The sequence spans 371 residues: Queuine tRNA-ribosyltransferase (371 aa).

Catalysis depends on Asp90, which acts as the Proton acceptor. Substrate contacts are provided by residues 90–94 (DSGGF), Asp144, Gln188, and Gly215. The interval 246–252 (GVGTPED) is RNA binding. Asp265 functions as the Nucleophile in the catalytic mechanism. The RNA binding; important for wobble base 34 recognition stretch occupies residues 270–274 (TRNAR). Zn(2+)-binding residues include Cys303, Cys305, Cys308, and His334.

It belongs to the queuine tRNA-ribosyltransferase family. In terms of assembly, homodimer. Within each dimer, one monomer is responsible for RNA recognition and catalysis, while the other monomer binds to the replacement base PreQ1. It depends on Zn(2+) as a cofactor.

The enzyme catalyses 7-aminomethyl-7-carbaguanine + guanosine(34) in tRNA = 7-aminomethyl-7-carbaguanosine(34) in tRNA + guanine. It functions in the pathway tRNA modification; tRNA-queuosine biosynthesis. Its function is as follows. Catalyzes the base-exchange of a guanine (G) residue with the queuine precursor 7-aminomethyl-7-deazaguanine (PreQ1) at position 34 (anticodon wobble position) in tRNAs with GU(N) anticodons (tRNA-Asp, -Asn, -His and -Tyr). Catalysis occurs through a double-displacement mechanism. The nucleophile active site attacks the C1' of nucleotide 34 to detach the guanine base from the RNA, forming a covalent enzyme-RNA intermediate. The proton acceptor active site deprotonates the incoming PreQ1, allowing a nucleophilic attack on the C1' of the ribose to form the product. After dissociation, two additional enzymatic reactions on the tRNA convert PreQ1 to queuine (Q), resulting in the hypermodified nucleoside queuosine (7-(((4,5-cis-dihydroxy-2-cyclopenten-1-yl)amino)methyl)-7-deazaguanosine). This is Queuine tRNA-ribosyltransferase from Neisseria meningitidis serogroup B (strain ATCC BAA-335 / MC58).